A 99-amino-acid chain; its full sequence is Protein S100-A11 (99 aa).

Met-1 is modified (N-acetylmethionine). Thr-8 is modified (phosphothreonine). 2 consecutive EF-hand domains span residues 10–47 and 53–88; these read RCIESLIAIFQKHAGRDGNNTKISKTEFLIFMNTELAA and KDPGVLDRMMKKLDLDSDGQLDFQEFLNLIGGLAIA. 8 residues coordinate Ca(2+): Asn-29, Lys-31, Glu-36, Asp-66, Asp-68, Asp-70, Gln-72, and Glu-77.

It belongs to the S-100 family. In terms of assembly, homodimer; disulfide-linked. Phosphorylation at Thr-8 significantly suppresses homodimerization and promotes association with NCL/nucleolin which induces nuclear translocation.

Its subcellular location is the cytoplasm. It is found in the nucleus. Facilitates the differentiation and the cornification of keratinocytes. The protein is Protein S100-A11 (S100A11) of Sus scrofa (Pig).